The following is a 482-amino-acid chain: Bifunctional protein GlmU (482 aa).

The interval 1 to 238 is pyrophosphorylase; the sequence is MSAIRPAAVV…HREIAGINNR (238 aa). UDP-N-acetyl-alpha-D-glucosamine is bound by residues 12 to 15, lysine 26, glutamine 79, and 84 to 85; these read LAAG and GT. Aspartate 110 is a Mg(2+) binding site. 4 residues coordinate UDP-N-acetyl-alpha-D-glucosamine: glycine 147, glutamate 163, asparagine 178, and asparagine 236. Asparagine 236 contributes to the Mg(2+) binding site. The segment at 239–259 is linker; the sequence is VQLAEARRILNDRLLTGAMLA. The segment at 260–482 is N-acetyltransferase; sequence GVTVVDPATT…AVSREADGED (223 aa). Arginine 341 and lysine 359 together coordinate UDP-N-acetyl-alpha-D-glucosamine. Histidine 371 functions as the Proton acceptor in the catalytic mechanism. UDP-N-acetyl-alpha-D-glucosamine is bound by residues tyrosine 374 and asparagine 385. Residues alanine 388, 394–395, serine 413, alanine 431, and arginine 448 each bind acetyl-CoA; that span reads NY. Residues 460–482 are disordered; sequence RKRPGSAAAKAAEAVSREADGED. The segment covering 464–473 has biased composition (low complexity); sequence GSAAAKAAEA.

In the N-terminal section; belongs to the N-acetylglucosamine-1-phosphate uridyltransferase family. It in the C-terminal section; belongs to the transferase hexapeptide repeat family. In terms of assembly, homotrimer. Mg(2+) is required as a cofactor.

It localises to the cytoplasm. It carries out the reaction alpha-D-glucosamine 1-phosphate + acetyl-CoA = N-acetyl-alpha-D-glucosamine 1-phosphate + CoA + H(+). The catalysed reaction is N-acetyl-alpha-D-glucosamine 1-phosphate + UTP + H(+) = UDP-N-acetyl-alpha-D-glucosamine + diphosphate. Its pathway is nucleotide-sugar biosynthesis; UDP-N-acetyl-alpha-D-glucosamine biosynthesis; N-acetyl-alpha-D-glucosamine 1-phosphate from alpha-D-glucosamine 6-phosphate (route II): step 2/2. It functions in the pathway nucleotide-sugar biosynthesis; UDP-N-acetyl-alpha-D-glucosamine biosynthesis; UDP-N-acetyl-alpha-D-glucosamine from N-acetyl-alpha-D-glucosamine 1-phosphate: step 1/1. The protein operates within bacterial outer membrane biogenesis; LPS lipid A biosynthesis. Its function is as follows. Catalyzes the last two sequential reactions in the de novo biosynthetic pathway for UDP-N-acetylglucosamine (UDP-GlcNAc). The C-terminal domain catalyzes the transfer of acetyl group from acetyl coenzyme A to glucosamine-1-phosphate (GlcN-1-P) to produce N-acetylglucosamine-1-phosphate (GlcNAc-1-P), which is converted into UDP-GlcNAc by the transfer of uridine 5-monophosphate (from uridine 5-triphosphate), a reaction catalyzed by the N-terminal domain. The polypeptide is Bifunctional protein GlmU (Streptomyces coelicolor (strain ATCC BAA-471 / A3(2) / M145)).